We begin with the raw amino-acid sequence, 268 residues long: Large ribosomal subunit protein uL3 (268 aa).

Gln156 is subject to N5-methylglutamine. The span at 242 to 259 (VENEAAPADADNAAPEAA) shows a compositional bias: low complexity. Residues 242 to 268 (VENEAAPADADNAAPEAAADGEEGTQA) are disordered.

Belongs to the universal ribosomal protein uL3 family. As to quaternary structure, part of the 50S ribosomal subunit. Forms a cluster with proteins L14 and L19. Post-translationally, methylated by PrmB.

Its function is as follows. One of the primary rRNA binding proteins, it binds directly near the 3'-end of the 23S rRNA, where it nucleates assembly of the 50S subunit. This Maricaulis maris (strain MCS10) (Caulobacter maris) protein is Large ribosomal subunit protein uL3.